A 47-amino-acid polypeptide reads, in one-letter code: uncharacterized protein (47 aa).

The helical transmembrane segment at 28 to 45 threads the bilayer; the sequence is VMIWGCLPYFLYVLIRMF.

Its subcellular location is the cell membrane. This is an uncharacterized protein from Bacillus subtilis (strain 168).